Here is a 432-residue protein sequence, read N- to C-terminus: FMRFamide peptide receptor frpr-18 (432 aa).

The Extracellular portion of the chain corresponds to Met1–Ala8. The chain crosses the membrane as a helical span at residues Cys9–Phe29. Residues Ser30–Leu42 are Cytoplasmic-facing. The helical transmembrane segment at Leu43–Ile63 threads the bilayer. The Extracellular segment spans residues Pro64–Lys84. The helical transmembrane segment at Leu85–Thr105 threads the bilayer. Residues Leu106–Arg128 are Cytoplasmic-facing. A helical membrane pass occupies residues Asn129–Tyr149. Over Arg150–Gly176 the chain is Extracellular. The chain crosses the membrane as a helical span at residues Tyr177–Ala197. The Cytoplasmic segment spans residues Asn198–Thr225. Residues Thr226–Leu246 traverse the membrane as a helical segment. Over Asn247–Asp271 the chain is Extracellular. Residues Leu272 to Ser292 traverse the membrane as a helical segment. Residues Glu293–Cys432 are Cytoplasmic-facing. Disordered stretches follow at residues Ile328–Ser349 and Lys388–Glu411.

It belongs to the G-protein coupled receptor 1 family. In terms of tissue distribution, expressed in a subset of neurons in the head, midbody, and tail, including AIY, ASI, BAG, URA, CAN, I6, PVQ, DVA, RIM, and VC, and in the anal sphincter and intestinal muscles. Expression from the ASI neurons is involved in promoting arousal.

Its subcellular location is the cell membrane. Functionally, G-protein coupled receptor for flp-2 neuropeptides. May act through the G(q) alpha type of G proteins. Involved in mediating arousal from the sleep-like state called lethargus, which occurs during molting between larval and adult stages, in part by regulating touch sensitivity, and working in concert with neuropeptide pdf-1. In Caenorhabditis elegans, this protein is FMRFamide peptide receptor frpr-18.